The following is a 288-amino-acid chain: Shikimate dehydrogenase (NADP(+)) (288 aa).

Shikimate is bound by residues 21–23 and threonine 68; that span reads SLS. Residue lysine 72 is the Proton acceptor of the active site. Residue glutamate 84 participates in NADP(+) binding. The shikimate site is built by asparagine 93 and aspartate 108. NADP(+) is bound by residues 132–136 and leucine 230; that span reads GNGGA. Residue tyrosine 232 coordinates shikimate. Residue glycine 253 coordinates NADP(+).

It belongs to the shikimate dehydrogenase family. In terms of assembly, homodimer.

The enzyme catalyses shikimate + NADP(+) = 3-dehydroshikimate + NADPH + H(+). It functions in the pathway metabolic intermediate biosynthesis; chorismate biosynthesis; chorismate from D-erythrose 4-phosphate and phosphoenolpyruvate: step 4/7. Involved in the biosynthesis of the chorismate, which leads to the biosynthesis of aromatic amino acids. Catalyzes the reversible NADPH linked reduction of 3-dehydroshikimate (DHSA) to yield shikimate (SA). This chain is Shikimate dehydrogenase (NADP(+)), found in Gloeothece citriformis (strain PCC 7424) (Cyanothece sp. (strain PCC 7424)).